Here is a 1091-residue protein sequence, read N- to C-terminus: Sodium/potassium exporting P-type ATPase 5 (1091 aa).

At 1–63 (MSEGTVKENN…LGDDTKIDYK (63 aa)) the chain is on the cytoplasmic side. The chain crosses the membrane as a helical span at residues 64 to 84 (AMVLHQVCNAMIMVLVISMAI). Topologically, residues 85–90 (SFAVRD) are extracellular. Residues 91–111 (WITGGVISFVIAVNVLIGLVQ) traverse the membrane as a helical segment. The Cytoplasmic portion of the chain corresponds to 112–282 (EYKATKTMNS…TNVGTPLHRK (171 aa)). A helical membrane pass occupies residues 283 to 303 (LSKLAVLLFWIAVLFAIIVMA). The Extracellular segment spans residues 304–312 (SQKFDVDKR). Residues 313-333 (VAIYAICVALSMIPSSLVVVL) traverse the membrane as a helical segment. The Cytoplasmic segment spans residues 334–815 (TITMSVGAAV…RRMTDNIQKF (482 aa)). Catalysis depends on aspartate 369, which acts as the 4-aspartylphosphate intermediate. The Mg(2+) site is built by aspartate 369 and threonine 371. 2 residues coordinate ATP: threonine 371 and glutamate 483. The segment at 499–525 (ALTGEKSTNQSNENDQSSLSQHNEKPG) is disordered. A compositionally biased stretch (polar residues) spans 503–519 (EKSTNQSNENDQSSLSQ). Residues lysine 561, arginine 606, threonine 673, glycine 674, aspartate 675, arginine 732, and lysine 738 each coordinate ATP. Aspartate 757 contributes to the Mg(2+) binding site. Asparagine 760 contributes to the ATP binding site. A helical membrane pass occupies residues 816–836 (VLQLLAENVAQALYLIIGLVF). Residues 837 to 848 (RDENGKSVFPLS) are Extracellular-facing. Residues 849 to 869 (PVEVLWIIVVTSCFPAMGLGL) traverse the membrane as a helical segment. Topologically, residues 870–885 (EKAAPDLMDRPPNDSE) are cytoplasmic. Residues 886 to 906 (VGIFTWEVIIDTFAYGIIMTG) form a helical membrane-spanning segment. Over 907-943 (SCMASFTGSLYGINSGRLGHDCDGTYNSSCRDVYRSR) the chain is Extracellular. A helical transmembrane segment spans residues 944–964 (SAAFATMTWCALILAWEVVDM). At 965-991 (RRSFFRMHPDTDSPVKEFFRSIWGNQF) the chain is on the cytoplasmic side. A helical transmembrane segment spans residues 992 to 1012 (LFWSIIFGFVSAFPVVYIPVI). At 1013-1021 (NDKVFLHKP) the chain is on the extracellular side. Residues 1022–1042 (IGAEWGLAIAFTIAFWIGAEL) traverse the membrane as a helical segment. Topologically, residues 1043-1091 (YKCGKRRYFKTQRAHNSENDLERSSKHDPFEAYSTSTTLQSEINISVKH) are cytoplasmic.

Belongs to the cation transport ATPase (P-type) (TC 3.A.3) family. Type IID subfamily. Mg(2+) serves as cofactor. In terms of processing, the active site is phosphorylated in presence of sodium or potassium and in conditions of higher pH. Not phosphorylated in presence of calcium ions.

Its subcellular location is the cell membrane. It catalyses the reaction Na(+)(in) + ATP + H2O = Na(+)(out) + ADP + phosphate + H(+). The catalysed reaction is K(+)(in) + ATP + H2O = K(+)(out) + ADP + phosphate + H(+). Catalyzes the hydrolysis of ATP coupled with the export of sodium and potassium from the cell. May export potassium less efficiently. May transport other cations such as lithium. Sodium/potassium efflux ATPases are involved in salt tolerance and maintaining the membrane potential across the plasma membrane in high salinity (Na+) or alkaline (K+) environments. This chain is Sodium/potassium exporting P-type ATPase 5, found in Saccharomyces cerevisiae (strain ATCC 204508 / S288c) (Baker's yeast).